Reading from the N-terminus, the 675-residue chain is LVRKSCERLYEGRMGVWNGSLKAELRPAEKVLAKKTRSFTAAPLDTLLGAKVCVDDFNNWFYSKNMECPWTVGMTKFYKGWDEFLRKFPDGWVYCDADGSQFDSSLTPYLLNAVLSIRLWAMEDWDIGEQMLKNLYGEITYTPILTPDGTIVKKFKGNNSGQPSTVVDNTLMVLITMYYALRKAGYDTKTQEDMCVFYINGDDLCIAIHPDHEHVLDSFSRSFAELGLKYDFTQRHRNKQNLWFMSHRGILIDDIYIPKLEPERIVAILEWDKSKLPEHRLEAITAAMIESWGYGDLTHQIRRFYQWVLEQAPFNELAKQGRAPYVSEVGLRRLYTSERGSMDELEAYIDKYFERERGDSPELLVYHESRSTDDYQLVCSNNTHVFHQSKNEAVDTGLNEKFKEKEKQKEKEKEKQKEKEKDDASDGNDVSTSTKTGERDRDVNVGTSGTFTVPRIKSFTDKMILPRIKGKSVLNLNHLLQYNPQQIDISNTRATQSQFEKWYEGVRNDYGLNDNEMQVMLNGLMVWCIENGTSPDISGVWVMMDGETQVDYPIKPLIEHATPSFRQIMAHFSNAAEAYIAKRNATERYMPRYGIKRNLTDISLARYAFDFYEVNSKTPDRAREAHMQMKAAALRNTSRRMFGMDGSVSNKEENTERHTVEDVNRDMHSLLGMRN.

The RdRp catalytic domain occupies 92-216 (WVYCDADGSQ…AIHPDHEHVL (125 aa)). A compositionally biased stretch (basic and acidic residues) spans 390–424 (KNEAVDTGLNEKFKEKEKQKEKEKEKQKEKEKDDA). Residues 390-447 (KNEAVDTGLNEKFKEKEKQKEKEKEKQKEKEKDDASDGNDVSTSTKTGERDRDVNVGT) form a disordered region.

Belongs to the potyviridae genome polyprotein family. Post-translationally, genome polyprotein of potyviruses undergoes post-translational proteolytic processing by the main proteinase NIa-pro resulting in the production of at least ten individual proteins. The P1 proteinase and the HC-pro cleave only their respective C-termini autocatalytically. 6K1 is essential for proper proteolytic separation of P3 from CI.

The protein resides in the virion. It carries out the reaction RNA(n) + a ribonucleoside 5'-triphosphate = RNA(n+1) + diphosphate. Functionally, an RNA-dependent RNA polymerase that plays an essential role in the virus replication. Involved in aphid transmission, cell-to-cell and systemis movement, encapsidation of the viral RNA and in the regulation of viral RNA amplification. This chain is Genome polyprotein, found in Papaya ringspot virus (strain W).